Reading from the N-terminus, the 97-residue chain is Co-chaperonin GroES (97 aa).

It belongs to the GroES chaperonin family. Heptamer of 7 subunits arranged in a ring. Interacts with the chaperonin GroEL.

It localises to the cytoplasm. In terms of biological role, together with the chaperonin GroEL, plays an essential role in assisting protein folding. The GroEL-GroES system forms a nano-cage that allows encapsulation of the non-native substrate proteins and provides a physical environment optimized to promote and accelerate protein folding. GroES binds to the apical surface of the GroEL ring, thereby capping the opening of the GroEL channel. This is Co-chaperonin GroES from Blochmanniella floridana.